A 905-amino-acid chain; its full sequence is Protein LONGIFOLIA 2 (905 aa).

Disordered regions lie at residues 42-136 (VSGG…GGLM), 232-268 (RLSL…RSSS), 285-315 (DTEQ…SRSV), 432-585 (STSP…SDSN), 606-626 (CDFP…IKQD), and 690-711 (VPFP…ECSP). Basic and acidic residues predominate over residues 65 to 74 (ESDKETERSS). Low complexity predominate over residues 90-117 (FESSSRPSFSSSPRSSSFSSAEVSTTAS). Residues 286-296 (TEQRRENRFCD) are compositionally biased toward basic and acidic residues. 3 stretches are compositionally biased toward polar residues: residues 432–461 (STSP…SGKQ), 477–487 (LDSTKSNSPKT), and 501–516 (MTKS…SPRT). Residues 566 to 581 (PDDRLSDARSDLRSLR) show a composition bias toward basic and acidic residues.

Interacts (via C-terminus) with TON1A and TON1B.

The protein localises to the cytoplasm. The protein resides in the cytoskeleton. In association with LNG1, regulates leaf morphology by promoting longitudinal polar cell elongation independently of ROT3. Associates with microtubules and recruits TON1A and TON1B to the cytoskeleton through its C-terminus. This Arabidopsis thaliana (Mouse-ear cress) protein is Protein LONGIFOLIA 2 (LNG2).